Reading from the N-terminus, the 494-residue chain is Glutamyl-tRNA reductase (494 aa).

Substrate contacts are provided by residues 58 to 61 (TCNR), Ser118, 123 to 125 (EQQ), and Gln129. Cys59 acts as the Nucleophile in catalysis. 205-210 (GAGAMA) is an NADP(+) binding site. Residues 448-494 (KGANAGSGQRKKQKPQENRVSTARAVYRSTYQDLTQASTPGGKDDDQ) form a disordered region. Residues 476–486 (STYQDLTQAST) show a composition bias toward polar residues.

Belongs to the glutamyl-tRNA reductase family. Homodimer.

The catalysed reaction is (S)-4-amino-5-oxopentanoate + tRNA(Glu) + NADP(+) = L-glutamyl-tRNA(Glu) + NADPH + H(+). The protein operates within porphyrin-containing compound metabolism; protoporphyrin-IX biosynthesis; 5-aminolevulinate from L-glutamyl-tRNA(Glu): step 1/2. In terms of biological role, catalyzes the NADPH-dependent reduction of glutamyl-tRNA(Glu) to glutamate 1-semialdehyde (GSA). In Corynebacterium urealyticum (strain ATCC 43042 / DSM 7109), this protein is Glutamyl-tRNA reductase.